Here is a 258-residue protein sequence, read N- to C-terminus: Ribosomal RNA small subunit methyltransferase A (258 aa).

His-13, Leu-15, Gly-40, Glu-61, Asp-86, and Asn-106 together coordinate S-adenosyl-L-methionine.

It belongs to the class I-like SAM-binding methyltransferase superfamily. rRNA adenine N(6)-methyltransferase family. RsmA subfamily.

The protein resides in the cytoplasm. The catalysed reaction is adenosine(1518)/adenosine(1519) in 16S rRNA + 4 S-adenosyl-L-methionine = N(6)-dimethyladenosine(1518)/N(6)-dimethyladenosine(1519) in 16S rRNA + 4 S-adenosyl-L-homocysteine + 4 H(+). Its function is as follows. Specifically dimethylates two adjacent adenosines (A1518 and A1519) in the loop of a conserved hairpin near the 3'-end of 16S rRNA in the 30S particle. May play a critical role in biogenesis of 30S subunits. This is Ribosomal RNA small subunit methyltransferase A from Coxiella burnetii (strain RSA 331 / Henzerling II).